Here is a 202-residue protein sequence, read N- to C-terminus: ATP-dependent Clp protease proteolytic subunit (202 aa).

Ser98 acts as the Nucleophile in catalysis. The active site involves His123.

The protein belongs to the peptidase S14 family. In terms of assembly, fourteen ClpP subunits assemble into 2 heptameric rings which stack back to back to give a disk-like structure with a central cavity, resembling the structure of eukaryotic proteasomes.

It is found in the cytoplasm. It catalyses the reaction Hydrolysis of proteins to small peptides in the presence of ATP and magnesium. alpha-casein is the usual test substrate. In the absence of ATP, only oligopeptides shorter than five residues are hydrolyzed (such as succinyl-Leu-Tyr-|-NHMec, and Leu-Tyr-Leu-|-Tyr-Trp, in which cleavage of the -Tyr-|-Leu- and -Tyr-|-Trp bonds also occurs).. Cleaves peptides in various proteins in a process that requires ATP hydrolysis. Has a chymotrypsin-like activity. Plays a major role in the degradation of misfolded proteins. This is ATP-dependent Clp protease proteolytic subunit from Desulfovibrio desulfuricans (strain ATCC 27774 / DSM 6949 / MB).